Consider the following 384-residue polypeptide: MESLMPWDARDTMSLRTEFVLFASQDGANIRSLCRRFGISPATGYKWLQRWAQEGAAGLQDRPRIPHHSPNRSSDDITALLRMAHDRHERWGARKIKRWLEDQGHTMPAFSTVHNLMARHGLLPGASPGIPATGRFEHDAPNRLWQMDFKGHFPFGGGRCHPLTLLDDHSRFSLCLAHCTDERRETVQQQLVSVFERYGLPDRMTMDNGSPWGDTTGTWTALELWLMRLGIRVGHSRPYHPQTQGKLERFHRSLKAEVLQGKWFADSGELQRAFDHWRTVYNLERPHEALDMAVPGSRYQPSARQYSGNTTPPEYDEGVMVRKVDISGKLSVKGVSLSAGKAFRGERVGLKEMQEDGSYEVWWYSTKVGVIDLKKKSITMGKGC.

Residues 137-303 form the Integrase catalytic domain; sequence EHDAPNRLWQ…VPGSRYQPSA (167 aa).

This is an uncharacterized protein from Escherichia coli (strain K12).